A 1031-amino-acid polypeptide reads, in one-letter code: Error-prone DNA polymerase (1031 aa).

This sequence belongs to the DNA polymerase type-C family. DnaE2 subfamily.

Its subcellular location is the cytoplasm. It catalyses the reaction DNA(n) + a 2'-deoxyribonucleoside 5'-triphosphate = DNA(n+1) + diphosphate. Its function is as follows. DNA polymerase involved in damage-induced mutagenesis and translesion synthesis (TLS). It is not the major replicative DNA polymerase. The sequence is that of Error-prone DNA polymerase from Pseudomonas savastanoi pv. phaseolicola (strain 1448A / Race 6) (Pseudomonas syringae pv. phaseolicola (strain 1448A / Race 6)).